Here is a 175-residue protein sequence, read N- to C-terminus: Endoribonuclease YbeY (175 aa).

3 residues coordinate Zn(2+): histidine 137, histidine 141, and histidine 147.

It belongs to the endoribonuclease YbeY family. Zn(2+) is required as a cofactor.

It is found in the cytoplasm. Single strand-specific metallo-endoribonuclease involved in late-stage 70S ribosome quality control and in maturation of the 3' terminus of the 16S rRNA. This Burkholderia ambifaria (strain ATCC BAA-244 / DSM 16087 / CCUG 44356 / LMG 19182 / AMMD) (Burkholderia cepacia (strain AMMD)) protein is Endoribonuclease YbeY.